The chain runs to 123 residues: Alpha-lactalbumin (123 aa).

The C-type lysozyme domain maps to 1–123 (KQFTKCELSQ…KLEQWLCEKE (123 aa)). Disulfide bonds link C6-C120, C28-C111, C61-C77, and C73-C91. A glycan (N-linked (GlcNAc...) asparagine) is linked at N45. K79, D82, D84, D87, and D88 together coordinate Ca(2+).

Belongs to the glycosyl hydrolase 22 family. As to quaternary structure, lactose synthase (LS) is a heterodimer of a catalytic component, beta1,4-galactosyltransferase (beta4Gal-T1) and a regulatory component, alpha-lactalbumin (LA). In terms of tissue distribution, mammary gland specific. Secreted in milk.

The protein resides in the secreted. Functionally, regulatory subunit of lactose synthase, changes the substrate specificity of galactosyltransferase in the mammary gland making glucose a good acceptor substrate for this enzyme. This enables LS to synthesize lactose, the major carbohydrate component of milk. In other tissues, galactosyltransferase transfers galactose onto the N-acetylglucosamine of the oligosaccharide chains in glycoproteins. The sequence is that of Alpha-lactalbumin (LALBA) from Papio cynocephalus (Yellow baboon).